Here is a 184-residue protein sequence, read N- to C-terminus: Flagellar transcriptional regulator FlhC (184 aa).

Zn(2+) contacts are provided by Cys144, Cys147, Cys163, and Cys166.

It belongs to the FlhC family. Heterohexamer composed of two FlhC and four FlhD subunits. Each FlhC binds a FlhD dimer, forming a heterotrimer, and a hexamer assembles by dimerization of two heterotrimers. Zn(2+) serves as cofactor.

It localises to the cytoplasm. In terms of biological role, functions in complex with FlhD as a master transcriptional regulator that regulates transcription of several flagellar and non-flagellar operons by binding to their promoter region. Activates expression of class 2 flagellar genes, including fliA, which is a flagellum-specific sigma factor that turns on the class 3 genes. Also regulates genes whose products function in a variety of physiological pathways. The polypeptide is Flagellar transcriptional regulator FlhC (Verminephrobacter eiseniae (strain EF01-2)).